Consider the following 451-residue polypeptide: 2,4-dinitrotoluene dioxygenase system, large oxygenase component (451 aa).

Positions 42–126 (WLFLTHDSLI…LQSVPFEKEL (85 aa)) constitute a Rieske domain. [2Fe-2S] cluster-binding residues include C84, H86, C104, and H107. Residues H211, H216, and D365 each coordinate Fe cation.

This sequence belongs to the bacterial ring-hydroxylating dioxygenase alpha subunit family. As to quaternary structure, the 2,4-dinitrotoluene dioxygenase (DNTDO) multicomponent enzyme system is composed of an electron transfer component and a dioxygenase component (iron sulfur protein (ISP)). The electron transfer component is composed of a ferredoxin reductase (DntAa) and a ferredoxin (DntAb), and the dioxygenase component is formed of a large alpha subunit (DntAc) and a small beta subunit (DntAd). [2Fe-2S] cluster serves as cofactor. Requires Fe(2+) as cofactor.

It catalyses the reaction 2,4-dinitrotoluene + NADH + O2 = 4-methyl-5-nitrocatechol + nitrite + NAD(+). Component of the 2,4-dinitrotoluene dioxygenase (DNTDO) multicomponent enzyme system which catalyzes the incorporation of both atoms of molecular oxygen into 2,4-dinitrotoluene (DNT) to form 4-methyl-5-nitrocatechol (MNC) and nitrite. The alpha subunit has a catalytic role in the holoenzyme. Also able to convert naphthalene to cis-(1R,2S)-dihydroxy-1,2-dihydronaphthalene. The polypeptide is 2,4-dinitrotoluene dioxygenase system, large oxygenase component (Burkholderia sp. (strain RASC)).